The primary structure comprises 411 residues: Formate-dependent phosphoribosylglycinamide formyltransferase (411 aa).

25-26 (EL) contributes to the N(1)-(5-phospho-beta-D-ribosyl)glycinamide binding site. ATP-binding positions include R118, K159, 164–169 (SSGAGQ), 199–202 (EQYI), and E207. The 196-residue stretch at 123-318 (TFAHDKLGLP…EFDLHARAIL (196 aa)) folds into the ATP-grasp domain. Positions 277 and 289 each coordinate Mg(2+). Residues D296, K366, and 373–374 (RR) contribute to the N(1)-(5-phospho-beta-D-ribosyl)glycinamide site.

The protein belongs to the PurK/PurT family. As to quaternary structure, homodimer.

It carries out the reaction N(1)-(5-phospho-beta-D-ribosyl)glycinamide + formate + ATP = N(2)-formyl-N(1)-(5-phospho-beta-D-ribosyl)glycinamide + ADP + phosphate + H(+). It participates in purine metabolism; IMP biosynthesis via de novo pathway; N(2)-formyl-N(1)-(5-phospho-D-ribosyl)glycinamide from N(1)-(5-phospho-D-ribosyl)glycinamide (formate route): step 1/1. In terms of biological role, involved in the de novo purine biosynthesis. Catalyzes the transfer of formate to 5-phospho-ribosyl-glycinamide (GAR), producing 5-phospho-ribosyl-N-formylglycinamide (FGAR). Formate is provided by PurU via hydrolysis of 10-formyl-tetrahydrofolate. This chain is Formate-dependent phosphoribosylglycinamide formyltransferase, found in Corynebacterium jeikeium (strain K411).